A 234-amino-acid chain; its full sequence is MSTKSMIRDVELAEEVLSEKAGGPQGSRSCLCLSLFSFLLVAGATTLFCLLHFGVIGPQREEQSPGGPSINSPLVQTLRSSSQASSNKPVAHVVADINSPGQLRWWDSYANALMANGVKLEDNQLVVPADGLYLIYSQVLFRGQGCPSTPLFLTHTISRIAVSYQTKVNILSAIKSPCHRETPEWAEAKPWYEPIYQGGVFQLEKGDRLSAEINLPDYLDYAESGQVYFGIIAL.

Topologically, residues 1–35 (MSTKSMIRDVELAEEVLSEKAGGPQGSRSCLCLSL) are cytoplasmic. Serine 2 is subject to Phosphoserine; by CK1. Lysine 20 is lipidated: N6-myristoyl lysine. A helical; Signal-anchor for type II membrane protein membrane pass occupies residues 36-56 (FSFLLVAGATTLFCLLHFGVI). Topologically, residues 57-234 (GPQREEQSPG…GQVYFGIIAL (178 aa)) are extracellular. Serine 81 carries an O-linked (GalNAc...) serine; in soluble form glycan. One can recognise a THD domain in the interval 89-234 (PVAHVVADIN…GQVYFGIIAL (146 aa)). Cysteines 146 and 178 form a disulfide.

This sequence belongs to the tumor necrosis factor family. Homotrimer. Interacts with SPPL2B. Post-translationally, the soluble form derives from the membrane form by proteolytic processing. The membrane-bound form is further proteolytically processed by SPPL2A or SPPL2B through regulated intramembrane proteolysis producing TNF intracellular domains (ICD1 and ICD2) released in the cytosol and TNF C-domain 1 and C-domain 2 secreted into the extracellular space. The membrane form, but not the soluble form, is phosphorylated on serine residues. Dephosphorylation of the membrane form occurs by binding to soluble TNFRSF1A/TNFR1. In terms of processing, O-glycosylated; glycans contain galactose, N-acetylgalactosamine and N-acetylneuraminic acid. Post-translationally, the soluble form is demyristoylated by SIRT6, promoting its secretion.

It localises to the cell membrane. It is found in the membrane. The protein localises to the secreted. Its function is as follows. Cytokine that binds to TNFRSF1A/TNFR1 and TNFRSF1B/TNFBR. It is mainly secreted by macrophages and can induce cell death of certain tumor cell lines. It is potent pyrogen causing fever by direct action or by stimulation of interleukin-1 secretion and is implicated in the induction of cachexia, Under certain conditions it can stimulate cell proliferation and induce cell differentiation. Induces insulin resistance in adipocytes via inhibition of insulin-induced IRS1 tyrosine phosphorylation and insulin-induced glucose uptake. Induces GKAP42 protein degradation in adipocytes which is partially responsible for TNF-induced insulin resistance. Plays a role in angiogenesis by inducing VEGF production synergistically with IL1B and IL6. Promotes osteoclastogenesis and therefore mediates bone resorption. Functionally, the TNF intracellular domain (ICD) form induces IL12 production in dendritic cells. This chain is Tumor necrosis factor (TNF), found in Bos taurus (Bovine).